The primary structure comprises 921 residues: MEYKDTLLMPKTDFPMRGNLPNKEPEWQAKWEEEKLYEKIQEKNAGRKAYILHDGPPYANGELHMGHALNKTIKDIIVRYKSMAGFSSPYVPGWDTHGLPIETAIAKKGVKRKEMSIAEFRKLCAEYAMTQVDGQRTGFKRLGINGDWENPYITLLPEYEAEQIKVFGEMAKKGYIYKGKKPVYWSPSSESALAEAEIEYQDKTSASIFVAFKVTDGKGVLDEGTNIVIWTTTPWTIPANMGITVNPDLDYVVIESAGEKYVVAEALLPSLREKLGFEDATVVKTVRGSELDRVVTKHPFYDRDSLVMNGEHATAEAGTGAVHTAPGHGEDDFLIGKKYDLEILAPLDDRGVFTEEAPGFEGVFYDTANKMVTEKLEEVGALLKMEFITHSYPHDWRTKKPVIFRATAQWFASIDAFRDDLLAAVKGVNWTPAWGETRLFNMVRDRGDWVISRQRAWGVPLPIFYAENGEAIITDETINHISELFREHGSNVWFERDVKDLLPAGFTHPGSPNGEFTKETDIMDVWFDSGSSHQAVLNARPELSRPADLYMEGSDQYRGWFNSSLTTAVAITGEAPYRNVLSHGFALDGEGRKMSKSLGNTLLPGKVIKQLGADIVRLWVASVDYQADVRVSDEILKQVSEVYRKIRNTMRFLLGNINDFNPTTNGVSYENLREVDKYMLIKLNDLVKNVKDSYEAFEFSTIYHQINNFCTVELSQFYMDFAKDVVYIEAADSHDRRAMQTVFYEAVVTLTKLLAPILPHTTEEVWNSLIGEGAESIHLQDLPDVKVLADSEEITAKWDAFMQIRDNVQKALEFARNEKLIGKSMLAKVTLYVDGEAKTLFDSLEGDFAQLFIVSDFELVEGLENAPESAFKSNQVAVQITVAEGETCERCRVVKKDVGVNPKHPTLCGRCADIVVKHYEA.

The 'HIGH' region motif lies at 57-67; it reads PYANGELHMGH. Position 552 (Glu552) interacts with L-isoleucyl-5'-AMP. A 'KMSKS' region motif is present at residues 593–597; the sequence is KMSKS. Position 596 (Lys596) interacts with ATP. Residues Cys888, Cys891, Cys908, and Cys911 each contribute to the Zn(2+) site.

The protein belongs to the class-I aminoacyl-tRNA synthetase family. IleS type 1 subfamily. Monomer. Requires Zn(2+) as cofactor.

The protein localises to the cytoplasm. The catalysed reaction is tRNA(Ile) + L-isoleucine + ATP = L-isoleucyl-tRNA(Ile) + AMP + diphosphate. Functionally, catalyzes the attachment of isoleucine to tRNA(Ile). As IleRS can inadvertently accommodate and process structurally similar amino acids such as valine, to avoid such errors it has two additional distinct tRNA(Ile)-dependent editing activities. One activity is designated as 'pretransfer' editing and involves the hydrolysis of activated Val-AMP. The other activity is designated 'posttransfer' editing and involves deacylation of mischarged Val-tRNA(Ile). This Listeria innocua serovar 6a (strain ATCC BAA-680 / CLIP 11262) protein is Isoleucine--tRNA ligase.